Here is a 729-residue protein sequence, read N- to C-terminus: Fatty acid oxidation complex subunit alpha (729 aa).

An enoyl-CoA hydratase/isomerase region spans residues 1–189 (MLYKGDTLYL…KIGLVDGVVK (189 aa)). Substrate is bound at residue D296. A 3-hydroxyacyl-CoA dehydrogenase region spans residues 311-729 (ETPKQAAVLG…ARPVGDLKTA (419 aa)). Residues M324, D343, 400–402 (VVE), K407, and S429 each bind NAD(+). H450 acts as the For 3-hydroxyacyl-CoA dehydrogenase activity in catalysis. An NAD(+)-binding site is contributed by N453. Residues N500 and Y660 each coordinate substrate. Positions 708–729 (RHNEPYYPPVEPARPVGDLKTA) are disordered.

In the N-terminal section; belongs to the enoyl-CoA hydratase/isomerase family. It in the C-terminal section; belongs to the 3-hydroxyacyl-CoA dehydrogenase family. In terms of assembly, heterotetramer of two alpha chains (FadB) and two beta chains (FadA).

It carries out the reaction a (3S)-3-hydroxyacyl-CoA + NAD(+) = a 3-oxoacyl-CoA + NADH + H(+). The enzyme catalyses a (3S)-3-hydroxyacyl-CoA = a (2E)-enoyl-CoA + H2O. The catalysed reaction is a 4-saturated-(3S)-3-hydroxyacyl-CoA = a (3E)-enoyl-CoA + H2O. It catalyses the reaction (3S)-3-hydroxybutanoyl-CoA = (3R)-3-hydroxybutanoyl-CoA. It carries out the reaction a (3Z)-enoyl-CoA = a 4-saturated (2E)-enoyl-CoA. The enzyme catalyses a (3E)-enoyl-CoA = a 4-saturated (2E)-enoyl-CoA. It functions in the pathway lipid metabolism; fatty acid beta-oxidation. Involved in the aerobic and anaerobic degradation of long-chain fatty acids via beta-oxidation cycle. Catalyzes the formation of 3-oxoacyl-CoA from enoyl-CoA via L-3-hydroxyacyl-CoA. It can also use D-3-hydroxyacyl-CoA and cis-3-enoyl-CoA as substrate. The sequence is that of Fatty acid oxidation complex subunit alpha from Escherichia coli (strain UTI89 / UPEC).